Reading from the N-terminus, the 493-residue chain is MSELTSLTIAEARQKLRAKEITAIELTEAYISAIDAANGRLNAYIKVTPDLARVMAKNSDERIAAGKAGELEGIPLGIKDLFATVGVHTQACSHILDGFEPRYESTVTQNLWDDGAVMLGKLNMDEFAMGSSNETSYYGPVINPWRAAGSNQQLVPGGSSGGSAAAVAAHLCAGATATDTGGSIRQPAAFTGTVGIKPTYGRCSRWGTVAFASSLDQAGPIARDVRDAAILLKSMASVDAKDTTSVDLPVPDYEAALGQSLKGMKIGIPNEYRVDGMPDEIETLWRQGIAWLKEAGAEIVDISLPHTKYALPAYYIVAPAEASSNLARYDGVRYGLRVDGKDIVDMYEKTRAAGFGKEVKRRIMIGTYVLSAGYYDAYYIRAQKVRTLIKRDFELAFDAGVDAILTPATPSSAFGVADENLAADPVKMYLNDIFTVTVNMAGLPGIAVPAGLDHKGLPLGLQLIGKPFDEETLFKTAHVIEQAAGRFTPAKWW.

Residues K79 and S159 each act as charge relay system in the active site. S183 (acyl-ester intermediate) is an active-site residue.

The protein belongs to the amidase family. GatA subfamily. Heterotrimer of A, B and C subunits.

It catalyses the reaction L-glutamyl-tRNA(Gln) + L-glutamine + ATP + H2O = L-glutaminyl-tRNA(Gln) + L-glutamate + ADP + phosphate + H(+). In terms of biological role, allows the formation of correctly charged Gln-tRNA(Gln) through the transamidation of misacylated Glu-tRNA(Gln) in organisms which lack glutaminyl-tRNA synthetase. The reaction takes place in the presence of glutamine and ATP through an activated gamma-phospho-Glu-tRNA(Gln). The polypeptide is Glutamyl-tRNA(Gln) amidotransferase subunit A (Rhizobium johnstonii (strain DSM 114642 / LMG 32736 / 3841) (Rhizobium leguminosarum bv. viciae)).